Consider the following 246-residue polypeptide: Mediator of RNA polymerase II transcription subunit 6 (246 aa).

2 disordered regions span residues 165 to 186 (MKKK…RSTN) and 207 to 246 (EALE…ATTK). 2 stretches are compositionally biased toward basic and acidic residues: residues 166–184 (KKKE…EERS) and 208–224 (ALEK…KPEE).

Belongs to the Mediator complex subunit 6 family. As to quaternary structure, component of the Mediator complex. Interacts with let-19/mdt-13. Interacts with RNA polymerase II. Interacts with mdt-28.

It localises to the nucleus. Functionally, component of the Mediator complex, a coactivator involved in the regulated transcription of nearly all RNA polymerase II-dependent genes. Mediator functions as a bridge to convey information from gene-specific regulatory proteins to the basal RNA polymerase II transcription machinery. Mediator is recruited to promoters by direct interactions with regulatory proteins and serves as a scaffold for the assembly of a functional preinitiation complex with RNA polymerase II and the general transcription factors. The sequence is that of Mediator of RNA polymerase II transcription subunit 6 (mdt-6) from Caenorhabditis briggsae.